The following is an 80-amino-acid chain: Exodeoxyribonuclease 7 small subunit (80 aa).

The protein belongs to the XseB family. In terms of assembly, heterooligomer composed of large and small subunits.

Its subcellular location is the cytoplasm. It catalyses the reaction Exonucleolytic cleavage in either 5'- to 3'- or 3'- to 5'-direction to yield nucleoside 5'-phosphates.. In terms of biological role, bidirectionally degrades single-stranded DNA into large acid-insoluble oligonucleotides, which are then degraded further into small acid-soluble oligonucleotides. This Escherichia coli O6:K15:H31 (strain 536 / UPEC) protein is Exodeoxyribonuclease 7 small subunit.